The chain runs to 510 residues: Catalase (510 aa).

Positions 1–26 are cleaved as a signal peptide; that stretch reads MPLLNWSRHMVCLTAAGLITVPTVYA. Residues histidine 78 and asparagine 150 contribute to the active site. Tyrosine 358 is a binding site for heme. Positions 386-400 are enriched in polar residues; it reads NQDGALNTGHTTSGV. Residues 386 to 412 are disordered; that stretch reads NQDGALNTGHTTSGVNYEPSRLEPRPA.

The protein belongs to the catalase family. Requires heme as cofactor.

It localises to the periplasm. It carries out the reaction 2 H2O2 = O2 + 2 H2O. Its function is as follows. Decomposes hydrogen peroxide into water and oxygen; serves to protect cells from the toxic effects of hydrogen peroxide. The sequence is that of Catalase (katB) from Pseudomonas syringae pv. syringae.